The primary structure comprises 90 residues: RNA-binding protein Hfq (90 aa).

In terms of domain architecture, Sm spans D11 to V71.

It belongs to the Hfq family. Homohexamer.

RNA chaperone that binds small regulatory RNA (sRNAs) and mRNAs to facilitate mRNA translational regulation in response to envelope stress, environmental stress and changes in metabolite concentrations. Also binds with high specificity to tRNAs. In Maricaulis maris (strain MCS10) (Caulobacter maris), this protein is RNA-binding protein Hfq.